Reading from the N-terminus, the 278-residue chain is Protoheme IX farnesyltransferase (278 aa).

The next 9 helical transmembrane spans lie at 12–32 (VIWL…GTVD), 36–56 (LAAL…FNHY), 72–92 (PLPA…ALSA), 105–124 (LPGV…YTVW), 130–150 (WLNI…GYAL), 157–177 (LPAV…IWAL), 204–224 (AIIS…YLVF), 228–248 (LPGL…SALA), and 257–277 (MWRM…ALVF).

This sequence belongs to the UbiA prenyltransferase family. Protoheme IX farnesyltransferase subfamily.

The protein resides in the cell membrane. The catalysed reaction is heme b + (2E,6E)-farnesyl diphosphate + H2O = Fe(II)-heme o + diphosphate. It participates in porphyrin-containing compound metabolism; heme O biosynthesis; heme O from protoheme: step 1/1. Converts heme B (protoheme IX) to heme O by substitution of the vinyl group on carbon 2 of heme B porphyrin ring with a hydroxyethyl farnesyl side group. This is Protoheme IX farnesyltransferase from Pyrobaculum neutrophilum (strain DSM 2338 / JCM 9278 / NBRC 100436 / V24Sta) (Thermoproteus neutrophilus).